The following is a 272-amino-acid chain: Undecaprenyl-diphosphatase (272 aa).

7 helical membrane-spanning segments follow: residues 6 to 26, 45 to 65, 92 to 112, 115 to 135, 189 to 209, 225 to 245, and 251 to 271; these read SLLIAFILGVVEGLTEFLPVS, AKTFEVIIQLGSILAVVVMFW, THILLAMIPAVVLGLVFHDVI, LFYPQNVMYALVVGGFLLLAA, YAASEFSFILAVPMMMGATVL, MFAVGFVTAFLVALIAIKTFL, and ISFVPFAIYRFIVAGVVYMVF.

It belongs to the UppP family.

It localises to the cell inner membrane. It carries out the reaction di-trans,octa-cis-undecaprenyl diphosphate + H2O = di-trans,octa-cis-undecaprenyl phosphate + phosphate + H(+). In terms of biological role, catalyzes the dephosphorylation of undecaprenyl diphosphate (UPP). Confers resistance to bacitracin. The chain is Undecaprenyl-diphosphatase from Pectobacterium carotovorum subsp. carotovorum (strain PC1).